Consider the following 201-residue polypeptide: ATP-dependent Clp protease proteolytic subunit (201 aa).

The Nucleophile role is filled by Ser-101. His-126 is a catalytic residue.

This sequence belongs to the peptidase S14 family. As to quaternary structure, fourteen ClpP subunits assemble into 2 heptameric rings which stack back to back to give a disk-like structure with a central cavity, resembling the structure of eukaryotic proteasomes.

It is found in the cytoplasm. It catalyses the reaction Hydrolysis of proteins to small peptides in the presence of ATP and magnesium. alpha-casein is the usual test substrate. In the absence of ATP, only oligopeptides shorter than five residues are hydrolyzed (such as succinyl-Leu-Tyr-|-NHMec, and Leu-Tyr-Leu-|-Tyr-Trp, in which cleavage of the -Tyr-|-Leu- and -Tyr-|-Trp bonds also occurs).. Cleaves peptides in various proteins in a process that requires ATP hydrolysis. Has a chymotrypsin-like activity. Plays a major role in the degradation of misfolded proteins. The protein is ATP-dependent Clp protease proteolytic subunit of Francisella tularensis subsp. tularensis (strain FSC 198).